The chain runs to 1086 residues: Rh5-interacting protein (1086 aa).

The first 19 residues, 1–19, serve as a signal peptide directing secretion; that stretch reads MFRIFFTLLIIILIKKTSA. N-linked (GlcNAc...) asparagine glycosylation is found at N103, N144, N228, N303, N334, N480, N498, N506, N526, and N646. EGF-like domains lie at 287–321 and 325–362; these read RCTQDICSVNQFCDGENETCTCKTSLLPSAKNNCE and LCTVLNCPENSTCEQIGNGKKAECKCENGKYYHNNKCY. 7 EGF-like domains span residues 636 to 675, 679 to 715, 719 to 753, 818 to 854, 858 to 897, 901 to 938, and 942 to 979; these read SCSNLCNKCHNNSTCYGNRFNYDCFCDNPYISKYGNKLCE, DCESVLCSQNQVCQILPNDKLICQCEEGYKNVKGKCV, KCDLSCPSNKVCVIENGKQTCKCSERFVLENGVCI, YCKDINCKENEECSIVNFKPECVCKENLKKNNKGECI, SCLINEGNCPKDSKCIYREYKPHECVCNKQGHVAVNGKCV, KCVHNKKCSENSICVNVMNKEPICVCTYNYYKKDGVCL, and PCLKDNGGCSRNSECTFKYSKINCTCKENYKNKDDSCV. Residues N964 and N1021 are each glycosylated (N-linked (GlcNAc...) asparagine).

Component of the PfRH5 adhesion complex composed of 1 copy of CyRPA, RH5 and RIPR; the complex is formed during merozoite invasion of host erythrocytes specifically at the interface between the parasite and host membranes. Within the complex, interacts with CyRPA. CyRPA recruitment of RIPR to RH5-P113-BSG leads to the formation of the PfRH5 adhesion complex which probably in turn releases RH5 from P113 while maintaining the interaction of the PfRH5 adhesion complex with BSG. Proteolytically cleaved into two chains of 125kDa and 65kDa which remain associated. The cleavage occurs at the schizont stage prior to the release of merozoites. In terms of processing, contains disulfide bonds.

Its subcellular location is the secreted. It localises to the cytoplasmic vesicle. The protein resides in the secretory vesicle. The protein localises to the microneme lumen. It is found in the cell membrane. Its subcellular location is the host cell membrane. Essential for the invasion of host erythrocytes by blood stage merozoites. As part of the PfRH5 adhesion complex, facilitates the interaction of RH5 and human BSG required for the Ca(2+) release into the erythrocyte. The chain is Rh5-interacting protein (RIPR) from Plasmodium falciparum (isolate 3D7).